A 195-amino-acid polypeptide reads, in one-letter code: Imidazoleglycerol-phosphate dehydratase (195 aa).

The protein belongs to the imidazoleglycerol-phosphate dehydratase family.

Its subcellular location is the cytoplasm. It catalyses the reaction D-erythro-1-(imidazol-4-yl)glycerol 3-phosphate = 3-(imidazol-4-yl)-2-oxopropyl phosphate + H2O. It functions in the pathway amino-acid biosynthesis; L-histidine biosynthesis; L-histidine from 5-phospho-alpha-D-ribose 1-diphosphate: step 6/9. The chain is Imidazoleglycerol-phosphate dehydratase from Deinococcus deserti (strain DSM 17065 / CIP 109153 / LMG 22923 / VCD115).